Here is a 181-residue protein sequence, read N- to C-terminus: CDP-diacylglycerol--glycerol-3-phosphate 3-phosphatidyltransferase (181 aa).

The next 4 membrane-spanning stretches (helical) occupy residues 8 to 28 (PNYL…AFYI), 35 to 55 (KLGA…GYIA), 64 to 84 (FGKM…IIML), and 148 to 168 (IIYL…LTII).

Belongs to the CDP-alcohol phosphatidyltransferase class-I family.

It localises to the cell membrane. The enzyme catalyses a CDP-1,2-diacyl-sn-glycerol + sn-glycerol 3-phosphate = a 1,2-diacyl-sn-glycero-3-phospho-(1'-sn-glycero-3'-phosphate) + CMP + H(+). Its pathway is phospholipid metabolism; phosphatidylglycerol biosynthesis; phosphatidylglycerol from CDP-diacylglycerol: step 1/2. Its function is as follows. This protein catalyzes the committed step to the synthesis of the acidic phospholipids. In Rickettsia felis (strain ATCC VR-1525 / URRWXCal2) (Rickettsia azadi), this protein is CDP-diacylglycerol--glycerol-3-phosphate 3-phosphatidyltransferase (pgsA).